A 233-amino-acid polypeptide reads, in one-letter code: MADS-box transcription factor 56 (233 aa).

The region spanning 1-61 (MVRGRTELKR…GRLYEFASAP (61 aa)) is the MADS-box domain. A K-box domain is found at 87 to 177 (IQQVKDDTLG…RGKHRNLEAA (91 aa)).

It localises to the nucleus. Functionally, probable transcription factor. In Oryza sativa subsp. indica (Rice), this protein is MADS-box transcription factor 56 (MADS56).